A 708-amino-acid polypeptide reads, in one-letter code: Leukotoxin translocation ATP-binding protein LktB (708 aa).

The region spanning Met-1–Val-126 is the Peptidase C39 domain. The region spanning Phe-155–Gln-437 is the ABC transmembrane type-1 domain. Helical transmembrane passes span Leu-159–Val-179, Leu-192–Leu-212, Ala-270–Tyr-290, Leu-296–Leu-316, and Val-389–Gly-409. One can recognise an ABC transporter domain in the interval Ile-469–Gln-704. Gly-503 to Ser-510 is an ATP binding site.

This sequence belongs to the ABC transporter superfamily. Protein-1 exporter (TC 3.A.1.109) family. As to quaternary structure, homodimer.

It is found in the cell inner membrane. It carries out the reaction ATP + H2O + proteinSide 1 = ADP + phosphate + proteinSide 2.. Its function is as follows. Part of the ABC transporter complex LktBD involved in leukotoxin export. Transmembrane domains (TMD) form a pore in the inner membrane and the ATP-binding domain (NBD) is responsible for energy generation. The chain is Leukotoxin translocation ATP-binding protein LktB (lktB) from Mannheimia haemolytica (Pasteurella haemolytica).